Consider the following 231-residue polypeptide: Ion-translocating oxidoreductase complex subunit E (231 aa).

Transmembrane regions (helical) follow at residues 18-38 (ALVQLLGLCPLLAVTSTATNA), 39-59 (LGLGLATTLVLTLTNLTISTL), 63-83 (TPAEIRIPIYVMIIASVVSAV), 86-106 (LINAYAFGLYQSLGIFIPLIV), 125-145 (ALSALDGFSIGMGATCAMFVL), and 182-202 (PFLLAMLPPGAFIGLGLMLAG).

It belongs to the NqrDE/RnfAE family. As to quaternary structure, the complex is composed of six subunits: RsxA, RsxB, RsxC, RsxD, RsxE and RsxG.

It is found in the cell inner membrane. Its function is as follows. Part of a membrane-bound complex that couples electron transfer with translocation of ions across the membrane. Required to maintain the reduced state of SoxR. This Escherichia coli O127:H6 (strain E2348/69 / EPEC) protein is Ion-translocating oxidoreductase complex subunit E.